The primary structure comprises 280 residues: UPF0750 membrane protein YitT (280 aa).

4 helical membrane-spanning segments follow: residues 9 to 29 (LLIV…FLIP), 54 to 74 (FYIS…ILGW), 80 to 100 (SFTV…GILP), and 151 to 171 (VGTY…LLQG).

Belongs to the UPF0750 family.

Its subcellular location is the cell membrane. The protein is UPF0750 membrane protein YitT (yitT) of Bacillus subtilis (strain 168).